Here is a 505-residue protein sequence, read N- to C-terminus: ATP synthase subunit alpha, chloroplastic (505 aa).

170–177 (GDRQTGKT) provides a ligand contact to ATP.

It belongs to the ATPase alpha/beta chains family. In terms of assembly, F-type ATPases have 2 components, CF(1) - the catalytic core - and CF(0) - the membrane proton channel. CF(1) has five subunits: alpha(3), beta(3), gamma(1), delta(1), epsilon(1). CF(0) has four main subunits: a, b, b' and c.

It localises to the plastid. It is found in the chloroplast thylakoid membrane. The catalysed reaction is ATP + H2O + 4 H(+)(in) = ADP + phosphate + 5 H(+)(out). In terms of biological role, produces ATP from ADP in the presence of a proton gradient across the membrane. The alpha chain is a regulatory subunit. The protein is ATP synthase subunit alpha, chloroplastic of Oenothera parviflora (Small-flowered evening primrose).